The chain runs to 2080 residues: Dysferlin (2080 aa).

The C2 1 domain occupies 1–101 (MLRVFILYAE…LATPSLSASF (101 aa)). Residues 1-2046 (MLRVFILYAE…FILWRRFRWA (2046 aa)) lie on the Cytoplasmic side of the membrane. Ca(2+) is bound by residues Asp18, Ile19, Asp21, and Asn40. Over residues 132 to 144 (LFPPPTPLEPSPT) the composition is skewed to pro residues. The tract at residues 132 to 215 (LFPPPTPLEP…APTSRKLLSD (84 aa)) is disordered. The segment covering 155 to 172 (GGEEDTEDQGLTGDEAEP) has biased composition (acidic residues). The residue at position 166 (Thr166) is a Phosphothreonine. Thr166 and Gly167 each carry phosphoserine. Phosphothreonine occurs at positions 197 and 198. C2 domains lie at 203–321 (KRSA…RKWL), 360–496 (DKED…EEEP), 1136–1262 (GVNR…PLTR), 1310–1438 (PPPQ…AESP), 1561–1679 (PMPP…ARCG), and 1795–1943 (GRPG…KKCS). Residues Asp1168, Asp1174, Asp1230, and Asp1232 each contribute to the Ca(2+) site. Positions 1594, 1600, 1649, 1651, 1914, 1917, and 1920 each coordinate Ca(2+). Residues 1995-2017 (SEHEERPAGQGRDEPNMNPKLED) are disordered. A helical membrane pass occupies residues 2047–2067 (IILFIILFILLLFLAIFIYAF). Residues 2068 to 2080 (PNYAAMKLVKPFS) lie on the Extracellular side of the membrane.

It belongs to the ferlin family. In terms of assembly, interacts with CACNA1S. Interacts with ANXA1; the interaction is Ca(2+)- and injury state-dependent. Interacts with ANXA2; the interaction is Ca(2+)- and injury state-dependent. Interacts with CACNA1S and PARVB. Interacts with TRIM72/MG53; interaction is required for transport to sites of cell injury during repair patch formation. Interacts with RIPOR2; this interaction occurs during early myogenic differentiation. Interacts with CAV3 and PARVB. Interacts with AHNAK; the interaction is direct and Ca(2+)-independent. Interacts with AHNAK2; the interaction is direct and Ca(2+)-independent. It depends on Ca(2+) as a cofactor. As to expression, expressed in skeletal muscle, myoblast, myotube and in the syncytiotrophoblast (STB) of the placenta (at protein level). Ubiquitous. Highly expressed in skeletal muscle. Also found in heart, brain, spleen, intestine, placenta and at lower levels in liver, lung, kidney and pancreas.

Its subcellular location is the cell membrane. It localises to the sarcolemma. The protein localises to the cytoplasmic vesicle membrane. Its function is as follows. Key calcium ion sensor involved in the Ca(2+)-triggered synaptic vesicle-plasma membrane fusion. Plays a role in the sarcolemma repair mechanism of both skeletal muscle and cardiomyocytes that permits rapid resealing of membranes disrupted by mechanical stress. This is Dysferlin (DYSF) from Homo sapiens (Human).